The sequence spans 144 residues: uncharacterized protein (144 aa).

Positions 48-119 (ELNKLKAKAD…KETEEPKMEL (72 aa)) form a coiled coil.

This is an uncharacterized protein from Archaeoglobus fulgidus (strain ATCC 49558 / DSM 4304 / JCM 9628 / NBRC 100126 / VC-16).